A 498-amino-acid polypeptide reads, in one-letter code: Probable lysophospholipase BODYGUARD 3 (498 aa).

An N-terminal signal peptide occupies residues 1 to 55 (MAVMKIKGAATVAGTWLNEAVSFVVFCILDIVDSFLCLLYKAADYLFEAEWKPCY). Cys-56 carries N-palmitoyl cysteine lipidation. An AB hydrolase-1 domain is found at 220–326 (VLFIHGFISS…LTLLAPPYYP (107 aa)). The active site involves His-224. Ser-297 functions as the Nucleophile in the catalytic mechanism. Active-site charge relay system residues include Asp-446 and His-474.

It localises to the cell membrane. It is found in the secreted. Its subcellular location is the cell wall. Its function is as follows. Involved in cuticle development and morphogenesis. The polypeptide is Probable lysophospholipase BODYGUARD 3 (Arabidopsis thaliana (Mouse-ear cress)).